Consider the following 7760-residue polypeptide: Malpinin synthetase (7760 aa).

Disordered regions lie at residues 42–115 (ENPE…VNEK) and 161–180 (LDLP…GDRV). The segment covering 65–79 (TPRSASPLSSYTGSP) has biased composition (polar residues). Residues 87-389 (TELSRTLSGD…LSLDERTFLL (303 aa)) are condensation 1. Basic and acidic residues predominate over residues 164–180 (PTDRPRPSHPSFEGDRV). An adenylation 1 region spans residues 409 to 813 (FEQQAERRPH…GRNDHQVKIR (405 aa)). The Carrier 1 domain occupies 926 to 1000 (PPQGELETAI…AFAHAIGQHR (75 aa)). An O-(pantetheine 4'-phosphoryl)serine modification is found at Ser-961. Residues 1046–1477 (QDIYALAPLQ…VLPADERKLL (432 aa)) are dual epimerase/condensation (E/C) domain 1. An adenylation 2 region spans residues 1498 to 1893 (FEQYADRVPN…GRTDYQVKIR (396 aa)). Positions 2003 to 2077 (APEGEVENAI…ALAQSIGEHR (75 aa)) constitute a Carrier 2 domain. Residue Ser-2038 is modified to O-(pantetheine 4'-phosphoryl)serine. Residues 2099–2558 (PLIDLNQNDI…LPTEERQLLT (460 aa)) are dual epimerase/condensation (E/C) domain 2. Positions 2578 to 2973 (FEQHVDRAPD…GRADFQVKIR (396 aa)) are adenylation 3. One can recognise a Carrier 3 domain in the interval 3083–3157 (APQGAVEAAI…ALAQSIGEHR (75 aa)). An O-(pantetheine 4'-phosphoryl)serine modification is found at Ser-3118. The segment at 3203 to 3634 (QDIYALAPLQ…HLNVLPAEER (432 aa)) is dual epimerase/condensation (E/C) domain 3. The tract at residues 3658 to 4057 (FEQQAERTPD…GRNDDQIKIR (400 aa)) is adenylation 4. One can recognise a Carrier 4 domain in the interval 4174 to 4248 (APQGEVETAL…AFASRVQEQL (75 aa)). O-(pantetheine 4'-phosphoryl)serine is present on Ser-4209. The segment at 4267-4705 (LPLSFAQQRL…AAEILSQDER (439 aa)) is condensation 2. Residues 4729–5133 (FEQRVESTPD…GRNDHQVKIR (405 aa)) are adenylation 5. The 75-residue stretch at 5250-5324 (APEGEVETAI…VFAASIGHHQ (75 aa)) folds into the Carrier 5 domain. The residue at position 5285 (Ser-5285) is an O-(pantetheine 4'-phosphoryl)serine. A dual dehydration/condensation (C*) domain region spans residues 5370-5804 (QDIYSLSPLQ…VLPAEERTLL (435 aa)). The adenylation 6 stretch occupies residues 5825–6224 (FEQQSERTPE…GRNDDQVKIR (400 aa)). The 75-residue stretch at 6338–6412 (APQGEVETAL…ALAQSIGQHH (75 aa)) folds into the Carrier 6 domain. Ser-6373 bears the O-(pantetheine 4'-phosphoryl)serine mark. The segment at 6458-6890 (QDIYALSPLQ…QLDTVPAEEH (433 aa)) is dual epimerase/condensation (E/C) domain 4. The segment at 6914–7300 (FEHQVERTPA…KFLPDGNVVC (387 aa)) is adenylation 7. A Carrier 7 domain is found at 7428–7503 (EPRGAIENIL…ELAPRLLATG (76 aa)). Residue Ser-7463 is modified to O-(pantetheine 4'-phosphoryl)serine. The segment at 7561–7722 (DNGNMASSLD…KPYVQGSIEV (162 aa)) is thioesterase (TE) domain.

It belongs to the NRP synthetase family.

Its function is as follows. Heptamodular nonribosomal peptide synthetase that catalyzes the biosynthesis of malpinins, natural products that show biosurfactant activities. Malpinins are acetylated hexapeptides (Ac-D-Leu/Val-D-Arg-D-Leu/Val-L-Phe/Leu-Dhb-D-Trp) containing a non-canonical amino acid derived from dehydration of L-Trp, (Z)-dehydrobutyrine (Dhb), at position 5, as well as a C-terminal D-amino acid, D-tryptophan, that can be oxidized to kynurenine. Incorporated D-amino acids in positions 1, 3 and 4 are variable resulting in the malpinin A-congeners malpinin B to E. Both modules M1 and M3 have relaxed specificity towards aliphatic amino acids (L-Leu &gt; L-Met &gt; L/D-Val &gt; L-Cys), explaining Val at position 1 and 3 in malpinin A-congeners malpinin B to D. The incorporation of L-Leu, but not N-acetyl-L-Leu by module 1 suggests the N-terminal acetylation occurs at a later stage of biosynthesis. Similar to M1 and M3, M4 has a broad substrate spectrum showing the highest activity with L-Phe followed by other hydrophobic amino acids (L-Phe &gt; L-Met = L-Trp). In contrast, M2, M5 and M6 are highly specific for L-Arg, L-Thr, and L-Trp, respectively. Solely, M7 converted its preferred substrate (L-Phe) with a 15 000-fold reduced turnover rate compared to the most active module M6, indicating that its A domain cannot contribute to the malpinin biosynthesis due to low activity. Since the last T domain in malA is apparently not loaded with an amino acid, either the TE domain must offload the oligopeptide from the preceding T domain or the dual E/C domain of M7 must transfer the final peptide chain to the free acceptor T domain of M7 prior to release. The chain is Malpinin synthetase from Mortierella alpina (Oleaginous fungus).